The sequence spans 151 residues: Cytochrome c-type biogenesis protein CcmE (151 aa).

At Met-1–Arg-8 the chain is on the cytoplasmic side. The helical; Signal-anchor for type II membrane protein transmembrane segment at Leu-9–Ala-29 threads the bilayer. Over Leu-30–Gly-151 the chain is Periplasmic. Residues His-124 and Tyr-128 each contribute to the heme site.

The protein belongs to the CcmE/CycJ family.

It is found in the cell inner membrane. In terms of biological role, heme chaperone required for the biogenesis of c-type cytochromes. Transiently binds heme delivered by CcmC and transfers the heme to apo-cytochromes in a process facilitated by CcmF and CcmH. The polypeptide is Cytochrome c-type biogenesis protein CcmE (Pseudomonas fluorescens (strain SBW25)).